The following is a 137-amino-acid chain: MKTFVLVSCLLVFTQIIYALDIKEISIMNRILEKCIRTVPKRENDPINPLRNVNVWYCAFTKRGIFTPKGVNTKQYINYCEKTAISPADIKLCKKIASKCVKKVYDRPGPIIERSKNLLSCVLKKGLLELTVYGKKK.

Residues 1–19 (MKTFVLVSCLLVFTQIIYA) form the signal peptide.

Belongs to the ant venom allergen 2/4 family. In terms of assembly, monomer. In terms of tissue distribution, expressed by the venom gland.

It is found in the secreted. The protein is Venom allergen 4 of Solenopsis invicta (Red imported fire ant).